A 92-amino-acid polypeptide reads, in one-letter code: Bombyxin A-1 (92 aa).

The N-terminal stretch at 1-19 is a signal peptide; that stretch reads MKILLAIALMLSTVMWVST. A Pyrrolidone carboxylic acid modification is found at glutamine 20. Cystine bridges form between cysteine 29/cysteine 79, cysteine 41/cysteine 92, and cysteine 78/cysteine 83. The propeptide at 50 to 70 is c peptide like; sequence SGAQFASYGSAWLMPYSEGRG.

It belongs to the insulin family. As to quaternary structure, heterodimer of a B chain and an A chain linked by two disulfide bonds.

It localises to the secreted. Brain peptide responsible for activation of prothoracic glands to produce ecdysone in insects. This Bombyx mori (Silk moth) protein is Bombyxin A-1 (BBXA1).